A 248-amino-acid chain; its full sequence is E3 ubiquitin-protein ligase BIG BROTHER (248 aa).

The RING-type; atypical zinc-finger motif lies at 197-238 (CVICQLKYKIGERQMNLPCKHVYHSECISKWLSINKVCPVCN).

As to quaternary structure, interacts with the E2 ubiquitin conjugating enzyme UBC10 via the RING domain. Interacts with DA1. Auto-ubiquitinated. In terms of tissue distribution, mostly expressed in inflorescence, and, to a lower extent, in seedlings, roots, stems, leaves and siliques.

It catalyses the reaction S-ubiquitinyl-[E2 ubiquitin-conjugating enzyme]-L-cysteine + [acceptor protein]-L-lysine = [E2 ubiquitin-conjugating enzyme]-L-cysteine + N(6)-ubiquitinyl-[acceptor protein]-L-lysine.. The protein operates within protein modification; protein ubiquitination. In terms of biological role, E3 ubiquitin-protein ligase that limits organ size, and possibly seed size, in a dose-dependent manner. Negatively regulates the duration of cell proliferation in leaves and petals independently of the major phytohormones (e.g. auxin, cytokinin, gibberellin, brassinosteroids, ethylene, abscisic acid, jasmonic acid), probably by targeting growth stimulators for degradation. Limits the proliferation of root meristematic cells. Polyubiquitinates DA1. Involved in the promotion of leaf senescence, in addition to its function in restricting plant growth. Possesses E3 ubiquitin-protein ligase activity in vitro. This is E3 ubiquitin-protein ligase BIG BROTHER (BB) from Arabidopsis thaliana (Mouse-ear cress).